Consider the following 211-residue polypeptide: Dual specificity phosphatase 29 (211 aa).

The 146-residue stretch at 47 to 192 (HVNEVWPGIY…LRTLDIQLAI (146 aa)) folds into the Tyrosine-protein phosphatase domain. 136 to 143 (HCAMGRSR) serves as a coordination point for substrate. Cys137 (phosphocysteine intermediate) is an active-site residue.

It belongs to the protein-tyrosine phosphatase family. Non-receptor class dual specificity subfamily.

It is found in the cytoplasm. It localises to the nucleus. It carries out the reaction O-phospho-L-tyrosyl-[protein] + H2O = L-tyrosyl-[protein] + phosphate. The catalysed reaction is O-phospho-L-seryl-[protein] + H2O = L-seryl-[protein] + phosphate. The enzyme catalyses O-phospho-L-threonyl-[protein] + H2O = L-threonyl-[protein] + phosphate. Functionally, dual specificity phosphatase able to dephosphorylate phosphotyrosine, phosphoserine and phosphothreonine residues within the same substrate, with a preference for phosphotyrosine as a substrate. Involved in the modulation of AMPK and MAPK1/2 signaling pathways. The sequence is that of Dual specificity phosphatase 29 (dusp29) from Callorhinchus milii (Ghost shark).